The following is a 157-amino-acid chain: Small ribosomal subunit protein uS7 (157 aa).

It belongs to the universal ribosomal protein uS7 family. As to quaternary structure, part of the 30S ribosomal subunit. Contacts proteins S9 and S11.

One of the primary rRNA binding proteins, it binds directly to 16S rRNA where it nucleates assembly of the head domain of the 30S subunit. Is located at the subunit interface close to the decoding center, probably blocks exit of the E-site tRNA. The chain is Small ribosomal subunit protein uS7 from Borrelia hermsii (strain HS1 / DAH).